A 680-amino-acid chain; its full sequence is WD repeat-containing protein 48 homolog (680 aa).

WD repeat units follow at residues 26-65 (QHRN…SEKY), 71-110 (HHND…CMST), 113-152 (THRD…ALTA), 164-203 (GSKD…RSMK), 206-245 (GHTE…CVQT), 248-287 (VHKE…NKTL), 290-329 (EEQA…RCTM), and 350-389 (KGGA…KKEQ). Residues 592–616 (ETTPSGGNANNSLQNSQSDANSEGS) form a disordered region.

Belongs to the WD repeat WDR48 family. As to quaternary structure, catalytic component of the Usp12-46 deubiquitylase complex consisting of Usp12-46, Wdr20 and Uaf1; regulatory subunit that, together wtih Wdr20, stabilizes Usp12-46. The Usp12-46 deubiquitylase complex associates with arr/arrow; the interaction leads to deubiquitination and stabilization of arr/arrow.

Functionally, regulatory component of the Usp12-46 deubiquitylase complex. activates deubiquitination by increasing the catalytic turnover without increasing the affinity of deubiquitinating enzymes for the substrate. The complex deubiquitylates the wg/wingless-signaling receptor arr/arrow, which stabilizes the receptor and increases its concentration at the cell surface; this enhances the sensitivity of cells to wg/wingless-signal stimulation. This increases the amplitude and spatial range of the signaling response to the wg/wingless morphogen gradient, facilitating the precise concentration-dependent regulation of its target genes. Together with Wdr20 and Usp12-46 required for wg/wingless-mediated signaling in the wing imaginal disc and for wg/wingless-dependent regulation of intestinal stem cell proliferation. This is WD repeat-containing protein 48 homolog from Drosophila yakuba (Fruit fly).